A 278-amino-acid chain; its full sequence is Antiviral protein MAP (278 aa).

A signal peptide spans 1-28; sequence MLTTTKVFFLLLTTWITWYAIVNPQSRA. A disulfide bridge connects residues Cys-64 and Cys-248. Glu-196 is a catalytic residue.

It carries out the reaction Endohydrolysis of the N-glycosidic bond at one specific adenosine on the 28S rRNA.. Functionally, inhibits viral infection of plants, and protein synthesis in vitro. In Mirabilis jalapa (Garden four-o'clock), this protein is Antiviral protein MAP.